The primary structure comprises 86 residues: Large ribosomal subunit protein bL31B (86 aa).

It belongs to the bacterial ribosomal protein bL31 family. Type B subfamily. As to quaternary structure, part of the 50S ribosomal subunit.

The protein is Large ribosomal subunit protein bL31B of Streptococcus equi subsp. zooepidemicus (strain H70).